The following is a 463-amino-acid chain: tRNA-2-methylthio-N(6)-dimethylallyladenosine synthase (463 aa).

Residues 18–136 (RKLYIETYGC…LPNLVGAAEQ (119 aa)) enclose the MTTase N-terminal domain. [4Fe-4S] cluster-binding residues include cysteine 27, cysteine 63, cysteine 100, cysteine 174, cysteine 178, and cysteine 181. The 233-residue stretch at 160–392 (GGVHINGFVS…IALQNRLSEE (233 aa)) folds into the Radical SAM core domain. In terms of domain architecture, TRAM spans 395–458 (KRDIGKTFEV…SATLFGEVVE (64 aa)).

The protein belongs to the methylthiotransferase family. MiaB subfamily. In terms of assembly, monomer. The cofactor is [4Fe-4S] cluster.

The protein localises to the cytoplasm. The catalysed reaction is N(6)-dimethylallyladenosine(37) in tRNA + (sulfur carrier)-SH + AH2 + 2 S-adenosyl-L-methionine = 2-methylsulfanyl-N(6)-dimethylallyladenosine(37) in tRNA + (sulfur carrier)-H + 5'-deoxyadenosine + L-methionine + A + S-adenosyl-L-homocysteine + 2 H(+). Its function is as follows. Catalyzes the methylthiolation of N6-(dimethylallyl)adenosine (i(6)A), leading to the formation of 2-methylthio-N6-(dimethylallyl)adenosine (ms(2)i(6)A) at position 37 in tRNAs that read codons beginning with uridine. This is tRNA-2-methylthio-N(6)-dimethylallyladenosine synthase from Porphyromonas gingivalis (strain ATCC BAA-308 / W83).